Consider the following 237-residue polypeptide: Ditrans,polycis-undecaprenyl-diphosphate synthase ((2E,6E)-farnesyl-diphosphate specific) (237 aa).

The active site involves aspartate 11. Aspartate 11 is a Mg(2+) binding site. Residues 12–15 (GNGR), tryptophan 16, arginine 24, histidine 28, and 56–58 (SIE) contribute to the substrate site. Asparagine 59 functions as the Proton acceptor in the catalytic mechanism. Substrate-binding positions include arginine 62, arginine 179, and 185 to 187 (RLS). Glutamate 198 is a Mg(2+) binding site.

Belongs to the UPP synthase family. As to quaternary structure, homodimer. Requires Mg(2+) as cofactor.

The enzyme catalyses 8 isopentenyl diphosphate + (2E,6E)-farnesyl diphosphate = di-trans,octa-cis-undecaprenyl diphosphate + 8 diphosphate. Its function is as follows. Catalyzes the sequential condensation of isopentenyl diphosphate (IPP) with (2E,6E)-farnesyl diphosphate (E,E-FPP) to yield (2Z,6Z,10Z,14Z,18Z,22Z,26Z,30Z,34E,38E)-undecaprenyl diphosphate (di-trans,octa-cis-UPP). UPP is the precursor of glycosyl carrier lipid in the biosynthesis of bacterial cell wall polysaccharide components such as peptidoglycan and lipopolysaccharide. The polypeptide is Ditrans,polycis-undecaprenyl-diphosphate synthase ((2E,6E)-farnesyl-diphosphate specific) (Coxiella burnetii (strain RSA 493 / Nine Mile phase I)).